We begin with the raw amino-acid sequence, 229 residues long: Protein GLC8 (229 aa).

Disordered regions lie at residues 1–21 (MGGI…QQDP), 35–62 (TQKN…EIIG), and 107–229 (QFQD…TKEP). Serine 12 is modified (phosphoserine). Over residues 107–117 (QFQDIHIDEPK) the composition is skewed to basic and acidic residues. The residue at position 118 (threonine 118) is a Phosphothreonine; by PHO85. Serine 158 carries the post-translational modification Phosphoserine. Residues 164-173 (FEIKENKQPD) are compositionally biased toward basic and acidic residues. Residues 175–184 (ETNDENDEDS) show a composition bias toward acidic residues. Serine 184 is modified (phosphoserine). A compositionally biased stretch (basic and acidic residues) spans 185–196 (PEARHKKFEEMR).

Post-translationally, phosphorylated by the cyclin-CDKs PCL6-PHO85 and PCL7-PHO85. Phosphorylation of Thr-118 inactivates GLC8.

Its function is as follows. Modulator of GLC7 type-1 protein phosphatase. This is Protein GLC8 (GLC8) from Saccharomyces cerevisiae (strain ATCC 204508 / S288c) (Baker's yeast).